The sequence spans 802 residues: Leucine--tRNA ligase (802 aa).

Positions 40–51 match the 'HIGH' region motif; that stretch reads PYPSGAGLHVGH. Positions 576-580 match the 'KMSKS' region motif; it reads KMSKS. K579 is a binding site for ATP.

The protein belongs to the class-I aminoacyl-tRNA synthetase family.

It is found in the cytoplasm. It carries out the reaction tRNA(Leu) + L-leucine + ATP = L-leucyl-tRNA(Leu) + AMP + diphosphate. This chain is Leucine--tRNA ligase, found in Bacillus mycoides (strain KBAB4) (Bacillus weihenstephanensis).